We begin with the raw amino-acid sequence, 368 residues long: tRNA-specific 2-thiouridylase MnmA (368 aa).

ATP is bound by residues 23-30 and Leu49; that span reads ALSGGVDS. Catalysis depends on Cys110, which acts as the Nucleophile. Cys110 and Cys209 are joined by a disulfide. Gly135 serves as a coordination point for ATP. Residues 159–161 are interaction with tRNA; that stretch reads KDQ. Cys209 acts as the Cysteine persulfide intermediate in catalysis. Residues 314 to 315 form an interaction with tRNA region; the sequence is RY.

It belongs to the MnmA/TRMU family.

The protein resides in the cytoplasm. The catalysed reaction is S-sulfanyl-L-cysteinyl-[protein] + uridine(34) in tRNA + AH2 + ATP = 2-thiouridine(34) in tRNA + L-cysteinyl-[protein] + A + AMP + diphosphate + H(+). Its function is as follows. Catalyzes the 2-thiolation of uridine at the wobble position (U34) of tRNA, leading to the formation of s(2)U34. This is tRNA-specific 2-thiouridylase MnmA from Synechococcus sp. (strain JA-2-3B'a(2-13)) (Cyanobacteria bacterium Yellowstone B-Prime).